The chain runs to 78 residues: Acyl carrier protein (78 aa).

The Carrier domain occupies 2–77 (SEIASRVKAI…DAVSYIEEHA (76 aa)). Ser37 is modified (O-(pantetheine 4'-phosphoryl)serine).

Belongs to the acyl carrier protein (ACP) family. 4'-phosphopantetheine is transferred from CoA to a specific serine of apo-ACP by AcpS. This modification is essential for activity because fatty acids are bound in thioester linkage to the sulfhydryl of the prosthetic group.

It is found in the cytoplasm. The protein operates within lipid metabolism; fatty acid biosynthesis. Carrier of the growing fatty acid chain in fatty acid biosynthesis. The chain is Acyl carrier protein from Bacteroides thetaiotaomicron (strain ATCC 29148 / DSM 2079 / JCM 5827 / CCUG 10774 / NCTC 10582 / VPI-5482 / E50).